The following is a 145-amino-acid chain: 3-dehydroquinate dehydratase (145 aa).

The Proton acceptor role is filled by Y24. N75, H81, and D88 together coordinate substrate. H101 functions as the Proton donor in the catalytic mechanism. Substrate is bound by residues 102–103 and R112; that span reads IS.

It belongs to the type-II 3-dehydroquinase family. In terms of assembly, homododecamer.

It catalyses the reaction 3-dehydroquinate = 3-dehydroshikimate + H2O. It participates in metabolic intermediate biosynthesis; chorismate biosynthesis; chorismate from D-erythrose 4-phosphate and phosphoenolpyruvate: step 3/7. In terms of biological role, catalyzes a trans-dehydration via an enolate intermediate. The sequence is that of 3-dehydroquinate dehydratase from Rhizobium etli (strain CIAT 652).